Consider the following 233-residue polypeptide: Sugar fermentation stimulation protein homolog (233 aa).

The protein belongs to the SfsA family.

The protein is Sugar fermentation stimulation protein homolog of Rhodospirillum centenum (strain ATCC 51521 / SW).